A 497-amino-acid chain; its full sequence is MTQASSTSPEPSRRQPDSGIVLYDTMQRQKVPFVPSVPGRVGMYLCGPTVYSDAHLGHAKKEVAFDVIRRTLLHFGYQVRYVTNVTDVGHLQDDSDDGEDKIARRAALERLEPMEVADKYFWSFVEDMEALNVLKPSINPRATGHIPEQIALIEELIERGHAYVSDGSVYFDVRSWPEYGKLSGRRLDELEEGTREAVREEKRDPRDFALWKRAEPGHLMRWASPWGEGFPGWHIECSAMSLKYLGEGFDIHGGGLDLEFPHHEAEIAQAEAAGHPFARYWLHNNMVTVGGEKMSKSKGNFTTLKALFAQHDPMVIRFLLVSSHYRSITEFSDAAFESARSGYRRLTEALHEIERRLPAAPDQDDPALLEKIAGHIRTFEDAMRDDFNTPRAVAALFGLTTDVNAALNAGEVGRQALTAARDAYRTLGGGVLGLFAEGRTEREDDSQIVNALMELVLQARQHYRLQKQYAQADELRNTLAAVGVTVEDTREGPRWRR.

Residue cysteine 46 coordinates Zn(2+). The 'HIGH' region motif lies at 48–58 (PTVYSDAHLGH). Positions 237, 262, and 266 each coordinate Zn(2+). A 'KMSKS' region motif is present at residues 293-297 (KMSKS). An ATP-binding site is contributed by lysine 296.

The protein belongs to the class-I aminoacyl-tRNA synthetase family. In terms of assembly, monomer. Zn(2+) serves as cofactor.

Its subcellular location is the cytoplasm. It catalyses the reaction tRNA(Cys) + L-cysteine + ATP = L-cysteinyl-tRNA(Cys) + AMP + diphosphate. In Deinococcus geothermalis (strain DSM 11300 / CIP 105573 / AG-3a), this protein is Cysteine--tRNA ligase.